Reading from the N-terminus, the 121-residue chain is Large ribosomal subunit protein uL18 (121 aa).

Belongs to the universal ribosomal protein uL18 family. Part of the 50S ribosomal subunit; part of the 5S rRNA/L5/L18/L25 subcomplex. Contacts the 5S and 23S rRNAs.

This is one of the proteins that bind and probably mediate the attachment of the 5S RNA into the large ribosomal subunit, where it forms part of the central protuberance. The polypeptide is Large ribosomal subunit protein uL18 (Spiroplasma kunkelii).